The primary structure comprises 468 residues: Secreted triacylglycerol lipase LIP2 (468 aa).

The first 22 residues, 1–22 (MFGFRLFILAAVALAYIQCAAA), serve as a signal peptide directing secretion. Cysteines 125 and 295 form a disulfide. The active-site Nucleophile is the Ser209. Residues Asn242, Asn252, and Asn279 are each glycosylated (N-linked (GlcNAc...) asparagine). Catalysis depends on residues Asp355 and His389.

This sequence belongs to the AB hydrolase superfamily. Lipase family. Class Lip subfamily.

The protein localises to the secreted. It carries out the reaction a triacylglycerol + H2O = a diacylglycerol + a fatty acid + H(+). The catalysed reaction is a monoacylglycerol + H2O = glycerol + a fatty acid + H(+). It catalyses the reaction a diacylglycerol + H2O = a monoacylglycerol + a fatty acid + H(+). In terms of biological role, secreted lipase that hydrolyzes acylglycerol lipids such as triacylglycerols and consequently releases free fatty acid. Due to an absence of fatty acid synthase genes in Malassezia species, secretory lipases are essential for the yeast to generate free fatty acids from degradation of sebum and assimilate them as lipid sources for growth. Plays important roles not only in lipid metabolism but also in the immune response of host cells and pathogenesis. This Malassezia furfur (Pityriasis versicolor infection agent) protein is Secreted triacylglycerol lipase LIP2.